Here is a 69-residue protein sequence, read N- to C-terminus: MRAIISLLLISAMVFSMIEAVPVEEGLQLFEGERGGCLPRNKFCNPSSGPRCCSGLTCKELNIWANKCL.

An N-terminal signal peptide occupies residues 1–20 (MRAIISLLLISAMVFSMIEA). The propeptide occupies 21–34 (VPVEEGLQLFEGER). 3 disulfides stabilise this stretch: Cys-37–Cys-53, Cys-44–Cys-58, and Cys-52–Cys-68.

Belongs to the neurotoxin 01 (U2-agtx) family. In terms of tissue distribution, expressed by the venom gland.

It localises to the secreted. Its function is as follows. Insect active toxin causing rapid but reversible paralysis in crickets. No activity shown in mammals. Does not show effect on mammalian voltage-gated calcium channels. In Agelena orientalis (Funnel-web spider), this protein is U2-agatoxin-Ao1z.